The sequence spans 124 residues: Multifunctional methyltransferase subunit TRM112 homolog A (124 aa).

The region spanning 2–120 is the TRM112 domain; it reads RLITHNMLSC…NKGIPNMLLH (119 aa).

The protein belongs to the TRM112 family. In terms of assembly, interacts with TRM9.

Acts as an activator of both rRNA/tRNA and protein methyltransferases. Required for TRM9 tRNA methyltransferase activity. Involved in the regulation of cell division progression during organ growth. Required for the expression of cell cycle-related genes, and the G2-M phase progression during organogenesis. This is Multifunctional methyltransferase subunit TRM112 homolog A from Arabidopsis thaliana (Mouse-ear cress).